Reading from the N-terminus, the 146-residue chain is Regulator of ribonuclease activity B (146 aa).

The segment at 110–146 (WGTYFEDPDGEEEEGDEFDQDDEDGPADRDEVPATRH) is disordered. Over residues 115–134 (EDPDGEEEEGDEFDQDDEDG) the composition is skewed to acidic residues. A compositionally biased stretch (basic and acidic residues) spans 135 to 146 (PADRDEVPATRH).

This sequence belongs to the RraB family. As to quaternary structure, interacts with the C-terminal region of Rne.

It is found in the cytoplasm. Globally modulates RNA abundance by binding to RNase E (Rne) and regulating its endonucleolytic activity. Can modulate Rne action in a substrate-dependent manner by altering the composition of the degradosome. This Sodalis glossinidius (strain morsitans) protein is Regulator of ribonuclease activity B.